The sequence spans 473 residues: Chromosomal replication initiator protein DnaA (473 aa).

The domain I, interacts with DnaA modulators stretch occupies residues 1-90 (MSSSLWLQCL…KRVTAPKSET (90 aa)). The domain II stretch occupies residues 91–136 (IAPARTRTAADVAAESSAPAQLQARKPVHNIWRDEEPVAVDLNHRS). The segment at 137-353 (NVNPKHKFNN…GALNRVIANA (217 aa)) is domain III, AAA+ region. Positions 181, 183, 184, and 185 each coordinate ATP. Residues 354-473 (NFTGRPITID…YSNLIRTLSS (120 aa)) are domain IV, binds dsDNA.

It belongs to the DnaA family. As to quaternary structure, oligomerizes as a right-handed, spiral filament on DNA at oriC.

Its subcellular location is the cytoplasm. Plays an essential role in the initiation and regulation of chromosomal replication. ATP-DnaA binds to the origin of replication (oriC) to initiate formation of the DNA replication initiation complex once per cell cycle. Binds the DnaA box (a 9 base pair repeat at the origin) and separates the double-stranded (ds)DNA. Forms a right-handed helical filament on oriC DNA; dsDNA binds to the exterior of the filament while single-stranded (ss)DNA is stabiized in the filament's interior. The ATP-DnaA-oriC complex binds and stabilizes one strand of the AT-rich DNA unwinding element (DUE), permitting loading of DNA polymerase. After initiation quickly degrades to an ADP-DnaA complex that is not apt for DNA replication. Binds acidic phospholipids. The protein is Chromosomal replication initiator protein DnaA of Vibrio atlanticus (strain LGP32) (Vibrio splendidus (strain Mel32)).